A 440-amino-acid chain; its full sequence is Proline--tRNA ligase (440 aa).

This sequence belongs to the class-II aminoacyl-tRNA synthetase family. ProS type 2 subfamily. Homodimer.

It localises to the cytoplasm. The catalysed reaction is tRNA(Pro) + L-proline + ATP = L-prolyl-tRNA(Pro) + AMP + diphosphate. In terms of biological role, catalyzes the attachment of proline to tRNA(Pro) in a two-step reaction: proline is first activated by ATP to form Pro-AMP and then transferred to the acceptor end of tRNA(Pro). This chain is Proline--tRNA ligase, found in Methylocella silvestris (strain DSM 15510 / CIP 108128 / LMG 27833 / NCIMB 13906 / BL2).